A 513-amino-acid polypeptide reads, in one-letter code: Putative ribose/galactose/methyl galactoside import ATP-binding protein (513 aa).

ABC transporter domains lie at 24–260 (LSAE…VGRE) and 270–510 (VPIG…VMEL). 56 to 63 (GENGAGKS) lines the ATP pocket.

The protein belongs to the ABC transporter superfamily. Carbohydrate importer 2 (CUT2) (TC 3.A.1.2) family.

It localises to the cell inner membrane. It catalyses the reaction D-ribose(out) + ATP + H2O = D-ribose(in) + ADP + phosphate + H(+). The catalysed reaction is D-galactose(out) + ATP + H2O = D-galactose(in) + ADP + phosphate + H(+). Part of an ABC transporter complex involved in carbohydrate import. Could be involved in ribose, galactose and/or methyl galactoside import. Responsible for energy coupling to the transport system. This chain is Putative ribose/galactose/methyl galactoside import ATP-binding protein, found in Rhizobium johnstonii (strain DSM 114642 / LMG 32736 / 3841) (Rhizobium leguminosarum bv. viciae).